A 510-amino-acid polypeptide reads, in one-letter code: MSASSTPRPVMLVILDGFGWREDESDNAVRLANTPTFDTLWATSPHAFLKTSGEDVGLPDGQMGNSEVGHLNIGAGRVVMQELPRISRSARDGSLAQNPALLEFIAALKASGGTCHLMGLISPGGVHAHQDHVVALTKIVSAAGVPVAVHIFSDGRDTAPRSGEDFIGKFLKELPDSVQIATLSGRYYAMDRDRRWERVALAVEAIRDAKGPHAKDALSALQASYASDKGDEFVLPTVLGDYAGMKDGDGILACNFRADRIRQLLDVLVLPDFTEYDSGRKVKFAAVCGMSRYSDHLAPYMSILFPKVPLDDLLGDVVAKAGRTQLRMAETEKYPHVTYFLNGGREVQFDGEERILVPSPKVATYDLQPEMSAPELTDKAVAAIESGKFDMIVLNFANPDMVGHTGSLSAAIKACETVDQGLGRINDAIVKAGGVLLVTADHGNCETMRDPVTGGAHTSHTLNVVPVILAHARGETIHDGRLADLAPTMLALMGVKQPDAMTGVSLLESA.

Residues Asp-16 and Ser-66 each contribute to the Mn(2+) site. Ser-66 functions as the Phosphoserine intermediate in the catalytic mechanism. Substrate contacts are provided by residues His-127, 156 to 157 (RD), Arg-186, Arg-192, 257 to 260 (RADR), and Lys-333. Asp-400, His-404, Asp-441, His-442, and His-460 together coordinate Mn(2+).

The protein belongs to the BPG-independent phosphoglycerate mutase family. Monomer. Mn(2+) is required as a cofactor.

It catalyses the reaction (2R)-2-phosphoglycerate = (2R)-3-phosphoglycerate. Its pathway is carbohydrate degradation; glycolysis; pyruvate from D-glyceraldehyde 3-phosphate: step 3/5. Functionally, catalyzes the interconversion of 2-phosphoglycerate and 3-phosphoglycerate. The protein is 2,3-bisphosphoglycerate-independent phosphoglycerate mutase of Gluconobacter oxydans (strain 621H) (Gluconobacter suboxydans).